The following is a 187-amino-acid chain: Oligoribonuclease (187 aa).

In terms of domain architecture, Exonuclease spans 7–170 (LIWIDLEMTG…DDIKDSINEL (164 aa)). The active site involves Tyr128.

It belongs to the oligoribonuclease family.

The protein localises to the cytoplasm. Its function is as follows. 3'-to-5' exoribonuclease specific for small oligoribonucleotides. In Legionella pneumophila (strain Paris), this protein is Oligoribonuclease.